We begin with the raw amino-acid sequence, 357 residues long: GDP-mannose transporter 2 (357 aa).

Residues 1–33 lie on the Cytoplasmic side of the membrane; the sequence is MASARNGVSKDELLPVYERRSQRDGDISGSVKS. A helical membrane pass occupies residues 34–54; it reads FASTIGNSASAAVLAYCLSSI. Over 55-68 the chain is Lumenal; it reads SMTLVNKYVVSGAS. A helical membrane pass occupies residues 69–89; the sequence is WNLSFLYLAMQSFIGTVAILA. The Cytoplasmic segment spans residues 90-107; it reads CKKTGLIQNLALFDLKKA. Residues 108 to 128 traverse the membrane as a helical segment; that stretch reads QTWLPISLLLVGMIYTGNKAL. A topological domain (lumenal) is located at residue Gln-129. A helical membrane pass occupies residues 130 to 150; sequence FLSVPVYTIFKNLTIIVIAYG. Topologically, residues 151–161 are cytoplasmic; it reads EVLMVGGGVKP. A helical membrane pass occupies residues 162-181; sequence LALLSFGLMVLSSVVAAWAD. At 182-196 the chain is on the lumenal side; that stretch reads IQNATTATVGASSDS. N-linked (GlcNAc...) asparagine glycosylation is present at Asn-184. Residues 197–217 form a helical membrane-spanning segment; the sequence is TAAALSALNAGYAWMGTNVIF. The Cytoplasmic portion of the chain corresponds to 218-236; the sequence is SASYALGMRRVIKKTNFDN. A helical transmembrane segment spans residues 237–257; it reads WDVMFYNNLLSIPILLLASVL. At 258–277 the chain is on the lumenal side; that stretch reads AEDWSSENLQRNFPAELRQS. Residues 278-298 traverse the membrane as a helical segment; sequence LFIGILYSGVAAVFISYCTAW. The Cytoplasmic portion of the chain corresponds to 299-306; it reads CVRATSST. Residues 307–327 form a helical membrane-spanning segment; that stretch reads TYAMVGALNKLPLAVAGIVFF. The Lumenal portion of the chain corresponds to 328–332; it reads AAPVT. Residues 333–352 form a helical membrane-spanning segment; the sequence is FGSVSAIVLGFISGLVYARA. The Cytoplasmic segment spans residues 353–357; it reads KSTGA.

It belongs to the TPT transporter family. SLC35D subfamily. In terms of assembly, homooligomer.

The protein localises to the golgi apparatus membrane. It localises to the cytoplasmic vesicle membrane. The protein resides in the endoplasmic reticulum membrane. In terms of biological role, involved in the import of GDP-mannose from the cytoplasm into the Golgi lumen. The sequence is that of GDP-mannose transporter 2 (gmt2) from Neosartorya fischeri (strain ATCC 1020 / DSM 3700 / CBS 544.65 / FGSC A1164 / JCM 1740 / NRRL 181 / WB 181) (Aspergillus fischerianus).